Reading from the N-terminus, the 366-residue chain is GDSL esterase/lipase LTL1 (366 aa).

The signal sequence occupies residues 1–27 (MNINCSPLGFLISLFFIVTFLAPQVKS). S36 functions as the Nucleophile in the catalytic mechanism. N117 carries N-linked (GlcNAc...) asparagine glycosylation. Catalysis depends on residues D326 and H329. N354 is a glycosylation site (N-linked (GlcNAc...) asparagine).

The protein belongs to the 'GDSL' lipolytic enzyme family. In terms of assembly, binds to VLG at the endomembrane system. Mostly expressed in flowers, reproductive stems and rosette leaves, and, to a lower extent, in roots.

It is found in the secreted. In terms of biological role, involved in the mechanisms of salt tolerance. Mediates resistance to LiCl and NaCl. The protein is GDSL esterase/lipase LTL1 of Arabidopsis thaliana (Mouse-ear cress).